We begin with the raw amino-acid sequence, 690 residues long: Calpain-9 (690 aa).

Residues 1–24 (MPYLHRSLRPQPQPVPRDARTVHS) are disordered. In terms of domain architecture, Calpain catalytic spans 42-337 (LFEDADFPAS…FDKVEICNLT (296 aa)). Ca(2+)-binding residues include leucine 81, glycine 83, and aspartate 88. Residue cysteine 97 is part of the active site. Ca(2+) is bound at residue glutamate 167. Catalysis depends on residues histidine 254 and asparagine 278. Positions 284, 291, 312, 314, and 316 each coordinate Ca(2+). The interval 338-521 (PDALEDNTLH…PQEEETEEER (184 aa)) is domain III. The tract at residues 522-690 (QFRALFRRIA…NEFINLTMNI (169 aa)) is domain IV. EF-hand domains lie at 534–552 (DMEV…VLQK), 561–589 (LSLL…FRVF), and 591–626 (DKLR…AGFQ). Ca(2+)-binding residues include aspartate 574, serine 576, asparagine 578, lysine 580, glutamate 585, aspartate 604, aspartate 606, serine 608, threonine 610, and glutamate 615.

The protein belongs to the peptidase C2 family. As to expression, predominantly expressed in stomach and small intestine, although low levels of expression in other organs.

Calcium-regulated non-lysosomal thiol-protease. This is Calpain-9 (Capn9) from Rattus norvegicus (Rat).